The following is a 539-amino-acid chain: Glucans biosynthesis protein D (539 aa).

A signal peptide (tat-type signal) is located at residues 1 to 31 (MHRRNLLKASMALAAYTGLSASGLLAARAWA).

Belongs to the OpgD/OpgG family. Post-translationally, predicted to be exported by the Tat system. The position of the signal peptide cleavage has not been experimentally proven.

The protein localises to the periplasm. Its pathway is glycan metabolism; osmoregulated periplasmic glucan (OPG) biosynthesis. Probably involved in the control of the structural glucose backbone of osmoregulated periplasmic glucans (OPGs). This is Glucans biosynthesis protein D from Pseudomonas fluorescens (strain ATCC BAA-477 / NRRL B-23932 / Pf-5).